The primary structure comprises 1392 residues: MNNPKWTPAQQAAIDLKGQLLVAAAAGSGKTAVLVQRLFKQITDVDEQVDVDRFLVVTFTKAAAAEMRERIGKALDEALFGAAEPAQVEHLLQQRALLYRASITTLHSFCMELIRQYFYLIELDPAFRVADEAEADLLRQDTLEDLFEAYYGEETPAFQSLVDAFGTDRDDQPLMASILRLHEFAMSQVHPGEWLEHLPAAYDWHSLDDLMESPWGQVVRQGVRDKVEEGLILLERAYRLAELPGGPVHYLPVLEDDQSRLGFLREMAEKGTWSDIETAFKSAAAFPGLPRGSKKNLPDSLIDEENSKRLREESKKARDEAKKKLEEIKNTVFSVPLTDQLPFLNKMGELVGTLAQVTQHFAREYQKAKRQRNCVDFSDLEHYALQLLAKDKQPTEIALKLQAYYAEVLVDEYQDINPVQERILQLVSRQEEGKANLFMVGDVKQSIYRFRMADPGLFLRKYGEFPHYQEGGGAAPNLVIDLNQNFRSRPEVIQGINYLFYQIMTEGAGEIVYDEQAALRPGAKFVSDGELRTAEGPIEVHLFDPKAIDLSLGQKRGAEDAATEVDSPAKGEGEEFEQNREPESGDDESSLEEAETARIEARLVAARIQKMVLEREFQIHDKELGDYRPVQYADIVILMRSLASVASVYAEEFQKAGIPVYAETNSGYFGTNEVDTVLSLLKIIDNPRLDIPFAAVLRSPLVGMNGTELGKLRSLLPQGDFYETLVLTFWAGDAHRQEEGHEFYSEIREILGKHWESLPQLEVKVRHILETSPEIKEKVDAFFPKLQEWRHRSRRTSLADLLWHLYEDTGYLAYVGTLPAGAQRQANLRVLYDRACRYEATNYRGLFRFLRFLEKFQSQGKDLGNASIVGEKENVVRFITVHSSKGLEFPVVFIAGLGKKFNTRSLSSQLLLHSHLGVGIPLIDIENQVRYPSVIQYAVKERLWQEALAEELRILYVALTRGKERLFLFGHQHKLAEAINKWRSLALSCPDTAFPDGQLRGAKTYLDWLGPALVRHPEDLFKLGSFPTASELPDSSSQWKVILHDQIAGKGPVQEATSSQDEIILPDQETLGEREASEETEIPGETEASGKTEIPGETKNSEETKTSEDKKNLEAQTPETADLDTKNLQEEVFRQLNWQYPYPEGVNQSAKTSVSELKRQSLWYMDNEYSSPSSSSSSSPSALSAPSFLRPQFIVSRKELTPAERGTAVHAAIQHLPLALWRDTWEELAQEVRESMLQEHIDSLIRREILSAEQGGAVSVSQLKNLLDSTSGKRLWEAEEVRREVPFTLSLRLRAQKEPVLVQGIIDAVLLSHQEHEAQVMDFKTDNLAGVPDPELVLTQRYGLQLGLYALAVERLLKVPVRECIIYATSLNREFVMQREAVQAALESVVIV.

In terms of domain architecture, UvrD-like helicase ATP-binding spans N3–R489. An ATP-binding site is contributed by A24 to T31. Disordered regions lie at residues R291 to D319, K555 to A594, and G1051 to K1126. Composition is skewed to basic and acidic residues over residues E305–D319 and S567–E583. The UvrD-like helicase C-terminal domain occupies R556–G886. Residues S584–A594 are compositionally biased toward acidic residues. The segment covering A1088–L1113 has biased composition (basic and acidic residues).

This sequence belongs to the helicase family. AddA subfamily. As to quaternary structure, heterodimer of AddA and AddB/RexB. Mg(2+) serves as cofactor.

The catalysed reaction is Couples ATP hydrolysis with the unwinding of duplex DNA by translocating in the 3'-5' direction.. It catalyses the reaction ATP + H2O = ADP + phosphate + H(+). Its function is as follows. The heterodimer acts as both an ATP-dependent DNA helicase and an ATP-dependent, dual-direction single-stranded exonuclease. Recognizes the chi site generating a DNA molecule suitable for the initiation of homologous recombination. The AddA nuclease domain is required for chi fragment generation; this subunit has the helicase and 3' -&gt; 5' nuclease activities. The polypeptide is ATP-dependent helicase/nuclease subunit A (Desulfitobacterium hafniense (strain DSM 10664 / DCB-2)).